The following is a 308-amino-acid chain: Methionyl-tRNA formyltransferase (308 aa).

109–112 (SLLP) contacts (6S)-5,6,7,8-tetrahydrofolate.

It belongs to the Fmt family.

The enzyme catalyses L-methionyl-tRNA(fMet) + (6R)-10-formyltetrahydrofolate = N-formyl-L-methionyl-tRNA(fMet) + (6S)-5,6,7,8-tetrahydrofolate + H(+). Its function is as follows. Attaches a formyl group to the free amino group of methionyl-tRNA(fMet). The formyl group appears to play a dual role in the initiator identity of N-formylmethionyl-tRNA by promoting its recognition by IF2 and preventing the misappropriation of this tRNA by the elongation apparatus. The chain is Methionyl-tRNA formyltransferase from Rhizorhabdus wittichii (strain DSM 6014 / CCUG 31198 / JCM 15750 / NBRC 105917 / EY 4224 / RW1) (Sphingomonas wittichii).